Here is an 813-residue protein sequence, read N- to C-terminus: Leucine--tRNA ligase (813 aa).

Residues 42–52 (PYTSGNLHIGH) carry the 'HIGH' region motif. Positions 580–584 (KMSKS) match the 'KMSKS' region motif. Residue Lys583 coordinates ATP.

This sequence belongs to the class-I aminoacyl-tRNA synthetase family.

Its subcellular location is the cytoplasm. The catalysed reaction is tRNA(Leu) + L-leucine + ATP = L-leucyl-tRNA(Leu) + AMP + diphosphate. This chain is Leucine--tRNA ligase, found in Dehalococcoides mccartyi (strain ATCC BAA-2100 / JCM 16839 / KCTC 5957 / BAV1).